Here is a 71-residue protein sequence, read N- to C-terminus: UPF0346 protein BCE_2336 (71 aa).

Belongs to the UPF0346 family.

This Bacillus cereus (strain ATCC 10987 / NRS 248) protein is UPF0346 protein BCE_2336.